The primary structure comprises 245 residues: NADH-quinone oxidoreductase subunit C (245 aa).

Basic and acidic residues predominate over residues 1–10; the sequence is MNAPQDRTDD. Disordered regions lie at residues 1–54 and 217–245; these read MNAP…GYGG and QRKD…RSYQ. Positions 11-28 are enriched in low complexity; that stretch reads GGVPVPVTPAGATGGAPA. Residues 39-54 are compositionally biased toward gly residues; that stretch reads GMFGDQGTGDVSGYGG.

The protein belongs to the complex I 30 kDa subunit family. NDH-1 is composed of 14 different subunits. Subunits NuoB, C, D, E, F, and G constitute the peripheral sector of the complex.

It localises to the cell membrane. The catalysed reaction is a quinone + NADH + 5 H(+)(in) = a quinol + NAD(+) + 4 H(+)(out). Functionally, NDH-1 shuttles electrons from NADH, via FMN and iron-sulfur (Fe-S) centers, to quinones in the respiratory chain. The immediate electron acceptor for the enzyme in this species is believed to be a menaquinone. Couples the redox reaction to proton translocation (for every two electrons transferred, four hydrogen ions are translocated across the cytoplasmic membrane), and thus conserves the redox energy in a proton gradient. This Salinispora arenicola (strain CNS-205) protein is NADH-quinone oxidoreductase subunit C.